A 404-amino-acid chain; its full sequence is S-adenosylmethionine synthase (404 aa).

141 to 146 (GQGSVD) serves as a coordination point for ATP.

This sequence belongs to the AdoMet synthase 2 family. It depends on Mg(2+) as a cofactor.

It carries out the reaction L-methionine + ATP + H2O = S-adenosyl-L-methionine + phosphate + diphosphate. It participates in amino-acid biosynthesis; S-adenosyl-L-methionine biosynthesis; S-adenosyl-L-methionine from L-methionine: step 1/1. In terms of biological role, catalyzes the formation of S-adenosylmethionine from methionine and ATP. This chain is S-adenosylmethionine synthase, found in Methanococcus vannielii (strain ATCC 35089 / DSM 1224 / JCM 13029 / OCM 148 / SB).